A 237-amino-acid polypeptide reads, in one-letter code: DNA repair protein RecO (237 aa).

Belongs to the RecO family.

Its function is as follows. Involved in DNA repair and RecF pathway recombination. In Flavobacterium johnsoniae (strain ATCC 17061 / DSM 2064 / JCM 8514 / BCRC 14874 / CCUG 350202 / NBRC 14942 / NCIMB 11054 / UW101) (Cytophaga johnsonae), this protein is DNA repair protein RecO.